Here is a 416-residue protein sequence, read N- to C-terminus: 4-hydroxy-3-methylbut-2-en-1-yl diphosphate synthase (flavodoxin) (416 aa).

Residues Cys304, Cys307, Cys350, and Glu357 each contribute to the [4Fe-4S] cluster site.

The protein belongs to the IspG family. It depends on [4Fe-4S] cluster as a cofactor.

It catalyses the reaction (2E)-4-hydroxy-3-methylbut-2-enyl diphosphate + oxidized [flavodoxin] + H2O + 2 H(+) = 2-C-methyl-D-erythritol 2,4-cyclic diphosphate + reduced [flavodoxin]. Its pathway is isoprenoid biosynthesis; isopentenyl diphosphate biosynthesis via DXP pathway; isopentenyl diphosphate from 1-deoxy-D-xylulose 5-phosphate: step 5/6. Its function is as follows. Converts 2C-methyl-D-erythritol 2,4-cyclodiphosphate (ME-2,4cPP) into 1-hydroxy-2-methyl-2-(E)-butenyl 4-diphosphate. The protein is 4-hydroxy-3-methylbut-2-en-1-yl diphosphate synthase (flavodoxin) of Burkholderia pseudomallei (strain K96243).